The primary structure comprises 135 residues: Allatotropins (135 aa).

The N-terminal stretch at 1–22 is a signal peptide; it reads MNFSMHLVLAVAAAACLCVVTA. Phe51 carries the phenylalanine amide modification. Positions 55 to 135 are excised as a propeptide; sequence DRPHTRAELY…SSEELLRNVA (81 aa).

In terms of tissue distribution, allatotropin: Expressed in corpora cardiaca (CC), corpora allata (CA), antennal lobe (AL) and gnathal ganglion (GNG) (protein level). Expression in AL detected in all animals, expression in GNG detected in most animals and expression in CA and CC detected in few animals (at protein level). Allatotropin-PP-1: Expressed in corpora cardiaca (CC), corpora allata (CA), antennal lobe (AL) and gnathal ganglion (GNG) (at protein level). Expression in AL detected in all animals and expression in GNG, CA and CC detected in some animals (at protein level).

The protein resides in the secreted. Functionally, neuropeptide stimulator of juvenile hormone synthesis. The protein is Allatotropins of Agrotis ipsilon (Black cutworm moth).